Reading from the N-terminus, the 35-residue chain is Photosystem II reaction center protein T (35 aa).

Residues 3-23 (ALVYTFLLVSTLGIIFFAIFF) traverse the membrane as a helical segment.

It belongs to the PsbT family. In terms of assembly, PSII is composed of 1 copy each of membrane proteins PsbA, PsbB, PsbC, PsbD, PsbE, PsbF, PsbH, PsbI, PsbJ, PsbK, PsbL, PsbM, PsbT, PsbY, PsbZ, Psb30/Ycf12, at least 3 peripheral proteins of the oxygen-evolving complex and a large number of cofactors. It forms dimeric complexes.

It localises to the plastid. Its subcellular location is the chloroplast thylakoid membrane. Functionally, found at the monomer-monomer interface of the photosystem II (PS II) dimer, plays a role in assembly and dimerization of PSII. PSII is a light-driven water plastoquinone oxidoreductase, using light energy to abstract electrons from H(2)O, generating a proton gradient subsequently used for ATP formation. The polypeptide is Photosystem II reaction center protein T (Gunnera chilensis (Chilean rhubarb)).